The sequence spans 28 residues: Toxin a (28 aa).

The LCN-type CS-alpha/beta domain maps to 3 to 28 (VPGNYPLDSYGNCYPCTILGDNQYCI).

The protein belongs to the long (3 C-C) scorpion toxin superfamily. Expressed by the venom gland.

Its subcellular location is the secreted. Its function is as follows. Binds to sodium channels (Nav) and affects the channel activation process. The polypeptide is Toxin a (Androctonus crassicauda (Arabian fat-tailed scorpion)).